A 257-amino-acid chain; its full sequence is MLLTLAGGALFFPGLFALCTWALRRSQPGWSRTDCVMISTRLVSSVHAVLATGSGIVIIRSCDDVITGRHWLAREYVWFLIPYMIYDSYAMYLCEWCRTRDQNRAPSLTLRNFLSRNRLMITHHAVILFVLVPVAQRLRGDLGDFFVGCIFTAELSTPFVSLGRVLIQLKQQHTLLYKVNGILTLATFLSCRILLFPFMYWSYGRQQGLSLLQVPFSIPFYCNVANAFLVAPQIYWFCLLCRKAVRLFDTPQAKKDG.

7 helical membrane-spanning segments follow: residues 1–21, 42–62, 77–97, 113–135, 142–162, 181–201, and 220–240; these read MLLTLAGGALFFPGLFALCTW, LVSSVHAVLATGSGIVIIRSC, VWFLIPYMIYDSYAMYLCEWC, FLSRNRLMITHHAVILFVLVPVA, LGDFFVGCIFTAELSTPFVSL, GILTLATFLSCRILLFPFMYW, and FYCNVANAFLVAPQIYWFCLL. The TLC domain maps to 33–249; the sequence is TDCVMISTRL…LCRKAVRLFD (217 aa).

As to quaternary structure, interacts with GGT7 isoform 3 and SLC3A2. As to expression, highly expressed in pancreas. Detected at intermediate levels in heart, placenta and kidney, and at low levels in brain, liver and skeletal muscle. Not detected in normal lung.

The protein resides in the cell membrane. This chain is TLC domain-containing protein 3A, found in Homo sapiens (Human).